Consider the following 291-residue polypeptide: Quinol oxidase subunit 2 (291 aa).

The signal sequence occupies residues Met1–Lys28. The next 2 membrane-spanning stretches (helical) occupy residues Ser49 to Ile69 and Leu91 to Val111.

It belongs to the cytochrome c oxidase subunit 2 family.

It localises to the cell membrane. It carries out the reaction 2 a quinol + O2 = 2 a quinone + 2 H2O. In terms of biological role, catalyzes quinol oxidation with the concomitant reduction of oxygen to water. Subunit II transfers the electrons from a quinol to the binuclear center of the catalytic subunit I. This is Quinol oxidase subunit 2 from Bacillus cereus (strain ATCC 14579 / DSM 31 / CCUG 7414 / JCM 2152 / NBRC 15305 / NCIMB 9373 / NCTC 2599 / NRRL B-3711).